The chain runs to 474 residues: Bifunctional protein HldE (474 aa).

A ribokinase region spans residues 1 to 317; the sequence is MKLSMPRFDQ…RRAIQRSEGS (317 aa). Position 194 to 197 (194 to 197) interacts with ATP; it reads NLSE. Residue Asp263 is part of the active site. The cytidylyltransferase stretch occupies residues 343 to 474; the sequence is FTNGCFDILH…AIVEKIRNNE (132 aa).

It in the N-terminal section; belongs to the carbohydrate kinase PfkB family. This sequence in the C-terminal section; belongs to the cytidylyltransferase family. Homodimer.

The catalysed reaction is D-glycero-beta-D-manno-heptose 7-phosphate + ATP = D-glycero-beta-D-manno-heptose 1,7-bisphosphate + ADP + H(+). It carries out the reaction D-glycero-beta-D-manno-heptose 1-phosphate + ATP + H(+) = ADP-D-glycero-beta-D-manno-heptose + diphosphate. The protein operates within nucleotide-sugar biosynthesis; ADP-L-glycero-beta-D-manno-heptose biosynthesis; ADP-L-glycero-beta-D-manno-heptose from D-glycero-beta-D-manno-heptose 7-phosphate: step 1/4. It participates in nucleotide-sugar biosynthesis; ADP-L-glycero-beta-D-manno-heptose biosynthesis; ADP-L-glycero-beta-D-manno-heptose from D-glycero-beta-D-manno-heptose 7-phosphate: step 3/4. Functionally, catalyzes the phosphorylation of D-glycero-D-manno-heptose 7-phosphate at the C-1 position to selectively form D-glycero-beta-D-manno-heptose-1,7-bisphosphate. In terms of biological role, catalyzes the ADP transfer from ATP to D-glycero-beta-D-manno-heptose 1-phosphate, yielding ADP-D-glycero-beta-D-manno-heptose. The polypeptide is Bifunctional protein HldE (Pseudomonas fluorescens (strain SBW25)).